The primary structure comprises 815 residues: SNF1 protein kinase subunit beta-1 (815 aa).

The segment covering 1-11 has biased composition (polar residues); sequence MGNSPSTQDPS. Disordered regions lie at residues 1-88 and 117-146; these read MGNS…TIDK and SDDH…TVKR. Gly-2 carries N-myristoyl glycine lipidation. Residues 12-31 are compositionally biased toward basic and acidic residues; sequence HSTKKEHGHHFHDAFNKDRQ. A compositionally biased stretch (polar residues) spans 32 to 42; the sequence is GSITSQLFNNR. Ser-33 is subject to Phosphoserine. Composition is skewed to basic and acidic residues over residues 72 to 88 and 117 to 129; these read PSTD…TIDK and SDDH…EEQV. A phosphoserine mark is found at Ser-181, Ser-198, Ser-200, Ser-206, Ser-209, and Ser-220. Disordered stretches follow at residues 311 to 335 and 362 to 389; these read HANN…NDDF and KHHN…FASL. Low complexity predominate over residues 313-326; it reads NNNGNIENNTRNKG. At Ser-331 the chain carries Phosphoserine. Residues 363–376 are compositionally biased toward basic residues; the sequence is HHNKTKKAQNKKIR. Residues 377 to 389 show a composition bias toward low complexity; sequence SVSNSRRSSFASL. The tract at residues 473 to 716 is kinase-interacting sequence (KIS); required for interaction with SNF1; the sequence is VSTDIASALK…LQQGGNIDAE (244 aa). Phosphoserine is present on residues Ser-494 and Ser-497. Positions 581–616 are disordered; that stretch reads EPTLDEELPKRPELKRFPSSSRKSSYYSAKGVERPS. Positions 587–596 are enriched in basic and acidic residues; sequence ELPKRPELKR. Over residues 599–608 the composition is skewed to low complexity; it reads SSSRKSSYYS. A Phosphoserine modification is found at Ser-643. Residues 724-804 form an association with SNF1 kinase complex (ASC) domain; required for interaction with SNF4 region; that stretch reads SRYPVPDLPI…FITQVVYAPC (81 aa).

The protein belongs to the 5'-AMP-activated protein kinase beta subunit family. Component of the SNF1 kinase complex, a heterotrimeric complex composed of the catalytic alpha subunit SNF1, one of the three related beta subunits SIP1, SIP2 or GAL83, and the regulatory gamma subunit SNF4. The beta subunit serves as a bridge between the catalytic and the regulatory subunit. Interacts (via KIS domain) with SNF1. Interacts (via ASC domain) with SNF4. In terms of processing, phosphorylated by SNF1 in vitro.

Its subcellular location is the cytoplasm. It is found in the vacuole membrane. In terms of biological role, beta subunit of the SNF1 kinase complex, which is required for transcriptional, metabolic, and developmental adaptations in response to glucose limitation. Has a structural role, mediating heterotrimer formation, and a regulatory role, defining carbon source-regulated subcellular location and substrate specificity of the SNF1 kinase complex. Promotes the PKA-regulated relocalization of the SNF1 kinase complex to the vacuolar membrane in response to various types of carbon stress. In Saccharomyces cerevisiae (strain ATCC 204508 / S288c) (Baker's yeast), this protein is SNF1 protein kinase subunit beta-1 (SIP1).